A 177-amino-acid chain; its full sequence is ATP-dependent protease subunit HslV (177 aa).

Thr-6 is an active-site residue. Residues Ala-162, Cys-165, and Thr-168 each contribute to the Na(+) site.

The protein belongs to the peptidase T1B family. HslV subfamily. As to quaternary structure, a double ring-shaped homohexamer of HslV is capped on each side by a ring-shaped HslU homohexamer. The assembly of the HslU/HslV complex is dependent on binding of ATP.

The protein localises to the cytoplasm. The catalysed reaction is ATP-dependent cleavage of peptide bonds with broad specificity.. Allosterically activated by HslU binding. Protease subunit of a proteasome-like degradation complex believed to be a general protein degrading machinery. The polypeptide is ATP-dependent protease subunit HslV (Lawsonia intracellularis (strain PHE/MN1-00)).